The primary structure comprises 123 residues: Putative membrane protein insertion efficiency factor (123 aa).

Belongs to the UPF0161 family.

It localises to the cell inner membrane. Its function is as follows. Could be involved in insertion of integral membrane proteins into the membrane. This Beijerinckia indica subsp. indica (strain ATCC 9039 / DSM 1715 / NCIMB 8712) protein is Putative membrane protein insertion efficiency factor.